The chain runs to 298 residues: Ribosomal RNA small subunit methyltransferase H (298 aa).

Residues 38-40, Asp57, Phe84, Asp100, and Gln107 each bind S-adenosyl-L-methionine; that span reads GGH.

The protein belongs to the methyltransferase superfamily. RsmH family.

The protein localises to the cytoplasm. It carries out the reaction cytidine(1402) in 16S rRNA + S-adenosyl-L-methionine = N(4)-methylcytidine(1402) in 16S rRNA + S-adenosyl-L-homocysteine + H(+). Its function is as follows. Specifically methylates the N4 position of cytidine in position 1402 (C1402) of 16S rRNA. The sequence is that of Ribosomal RNA small subunit methyltransferase H from Acaryochloris marina (strain MBIC 11017).